A 199-amino-acid polypeptide reads, in one-letter code: Pyrrolidone-carboxylate peptidase (199 aa).

Active-site residues include E80, C142, and H166.

It belongs to the peptidase C15 family. Homotetramer.

The protein localises to the cytoplasm. It carries out the reaction Release of an N-terminal pyroglutamyl group from a polypeptide, the second amino acid generally not being Pro.. Functionally, removes 5-oxoproline from various penultimate amino acid residues except L-proline. The sequence is that of Pyrrolidone-carboxylate peptidase from Oceanobacillus iheyensis (strain DSM 14371 / CIP 107618 / JCM 11309 / KCTC 3954 / HTE831).